The following is a 281-amino-acid chain: Voltage-dependent L-type calcium channel subunit alpha-1S (281 aa).

One copy of the III repeat lies at 1–8 (VGFVIVTF). The interval 1–17 (VGFVIVTFQEQGESEYK) is dihydropyridine binding. One copy of the IV repeat lies at 45–281 (NPYQYQIWYV…TCGTGFAYFY (237 aa)). A helical transmembrane segment spans residues 59 to 80 (YFEYLMFFLIMLNTICLGMQHY). N-linked (GlcNAc...) asparagine glycosylation occurs at Asn81. Residues 89–110 (VSDILNVAFTVLFTLEMILKLM) form a helical membrane-spanning segment. The helical transmembrane segment at 121–140 (PWNVFDFLIVIGSIIDVILS) threads the bilayer. A helical membrane pass occupies residues 153–171 (ITFFRLFRVMRLVKLLSRG). Residues 190–210 (YVALLIVMLFFIYAVIGMQMF) form a helical membrane-spanning segment. The segment at residues 233-251 (AVLLLFRCATGEAWQEILL) is an intramembrane region (pore-forming). Residues 242–245 (TGEA) carry the Selectivity filter of repeat IV motif. Residues 258–281 (RCDPESDYAEGEEYTCGTGFAYFY) are dihydropyridine binding. Residues Cys259 and Cys273 are joined by a disulfide bond. Positions 270-281 (EYTCGTGFAYFY) are phenylalkylamine binding.

Belongs to the calcium channel alpha-1 subunit (TC 1.A.1.11) family. CACNA1S subfamily. As to quaternary structure, component of a calcium channel complex consisting of a pore-forming alpha subunit (CACNA1S) and the ancillary subunits CACNB1 or CACNB2, CACNG1 and CACNA2D1. The channel complex contains alpha, beta, gamma and delta subunits in a 1:1:1:1 ratio, i.e. it contains either CACNB1 or CACNB2. CACNA1S channel activity is modulated by the auxiliary subunits (CACNB1 or CACNB2, CACNG1 and CACNA2D1). Interacts with DYSF and JSRP1. Interacts with RYR1. Interacts with CALM. Post-translationally, the alpha-1S subunit is found in two isoforms in the skeletal muscle: a minor form of 212 kDa containing the complete amino acid sequence, and a major form of 190 kDa derived from the full-length form by post-translational proteolysis close to Phe-1690. In terms of processing, both the minor and major forms are phosphorylated in vitro by PKA. Phosphorylation by PKA activates the calcium channel.

It is found in the cell membrane. The protein localises to the sarcolemma. The protein resides in the T-tubule. The enzyme catalyses Ca(2+)(in) = Ca(2+)(out). Its activity is regulated as follows. Channel activity is blocked by dihydropyridines (DHP), phenylalkylamines, and by benzothiazepines. Its function is as follows. Pore-forming, alpha-1S subunit of the voltage-gated calcium channel that gives rise to L-type calcium currents in skeletal muscle. Calcium channels containing the alpha-1S subunit play an important role in excitation-contraction coupling in skeletal muscle via their interaction with RYR1, which triggers Ca(2+) release from the sarcplasmic reticulum and ultimately results in muscle contraction. Long-lasting (L-type) calcium channels belong to the 'high-voltage activated' (HVA) group. In Gallus gallus (Chicken), this protein is Voltage-dependent L-type calcium channel subunit alpha-1S (CACNA1S).